A 201-amino-acid chain; its full sequence is Small ribosomal subunit protein uS4c (201 aa).

Residues 91–153 (MRLDNIVFRL…NASKKIVETN (63 aa)) enclose the S4 RNA-binding domain.

The protein belongs to the universal ribosomal protein uS4 family. In terms of assembly, part of the 30S ribosomal subunit. Contacts protein S5. The interaction surface between S4 and S5 is involved in control of translational fidelity.

It localises to the plastid. The protein resides in the cyanelle. One of the primary rRNA binding proteins, it binds directly to 16S rRNA where it nucleates assembly of the body of the 30S subunit. Its function is as follows. With S5 and S12 plays an important role in translational accuracy. The chain is Small ribosomal subunit protein uS4c (rps4) from Cyanophora paradoxa.